The sequence spans 123 residues: Small ribosomal subunit protein uS12 (123 aa).

Positions 1 to 28 (MPTIQQLIRKPREPKRVRSKSQHLESCP) are disordered. A 3-methylthioaspartic acid modification is found at Asp89.

The protein belongs to the universal ribosomal protein uS12 family. As to quaternary structure, part of the 30S ribosomal subunit. Contacts proteins S8 and S17. May interact with IF1 in the 30S initiation complex.

Functionally, with S4 and S5 plays an important role in translational accuracy. In terms of biological role, interacts with and stabilizes bases of the 16S rRNA that are involved in tRNA selection in the A site and with the mRNA backbone. Located at the interface of the 30S and 50S subunits, it traverses the body of the 30S subunit contacting proteins on the other side and probably holding the rRNA structure together. The combined cluster of proteins S8, S12 and S17 appears to hold together the shoulder and platform of the 30S subunit. This Cereibacter sphaeroides (strain ATCC 17029 / ATH 2.4.9) (Rhodobacter sphaeroides) protein is Small ribosomal subunit protein uS12.